The sequence spans 738 residues: Platelet endothelial cell adhesion molecule (738 aa).

Residues 1-27 (MQPRWAQGATMWLGVLLTLLLCSSLEG) form the signal peptide. Over 28–601 (QENSFTINSV…VRVILAPWKK (574 aa)) the chain is Extracellular. 3 consecutive Ig-like C2-type domains span residues 35 to 121 (NSVD…KTTA), 145 to 233 (GGIV…TESF), and 236 to 315 (PKFH…SKVS). N-linked (GlcNAc...) asparagine glycans are attached at residues Asn52, Asn84, and Asn151. Cys57 and Cys109 are oxidised to a cystine. 2 disulfides stabilise this stretch: Cys152-Cys206 and Cys256-Cys304. N-linked (GlcNAc...) asparagine glycans are attached at residues Asn301, Asn320, Asn344, Asn356, Asn453, and Asn551. Ig-like C2-type domains follow at residues 328–401 (PELE…NTVQ), 424–493 (GQTI…EVLR), and 499–591 (PVDE…KILT). Disulfide bonds link Cys347–Cys386, Cys431–Cys476, and Cys523–Cys572. A helical membrane pass occupies residues 602 to 620 (GLIAVVIIGVIIALLIIAA). Over 621–738 (KCYFLRKAKA…SRTEGSLDGT (118 aa)) the chain is Cytoplasmic. Cys622 carries the S-palmitoyl cysteine lipid modification. Residues 658-715 (EANSHYGHNDDVRNHAMKPINDNKEPLNSDVQYTEVQVSSAESHKDLGKKDTETVYSE) form a disordered region. Polar residues predominate over residues 686-698 (SDVQYTEVQVSSA). 2 short sequence motifs (ITIM motif) span residues 688–693 (VQYTEV) and 711–716 (TVYSEV). Phosphotyrosine; by FER occurs at positions 690 and 713. Basic and acidic residues predominate over residues 699 to 715 (ESHKDLGKKDTETVYSE). Residues 709-729 (TETVYSEVRKAVPDAVESRYS) are membrane-bound segment which detaches upon phosphorylation. The tract at residues 721-738 (PDAVESRYSRTEGSLDGT) is may play a role in cytoprotective signaling. A phosphoserine mark is found at Ser729 and Ser734.

In terms of assembly, trans-homodimer (via Ig-like C2-type 1 and Ig-like C2-type 2 domains); trans-homodimerization is required for cell-cell interaction. Forms a complex with BDKRB2 and GNAQ. Interacts with BDKRB2 and GNAQ. Interacts with PTPN11; Tyr-713 is critical for PTPN11 recruitment. Interacts with FER. Interacts (via Ig-like C2-type domain 6) with CD177; the interaction is Ca(2+)-dependent; the interaction is direct. Post-translationally, phosphorylated on Ser and Tyr residues after cellular activation by src kinases. Upon activation, phosphorylated on Ser-729 which probably initiates the dissociation of the membrane-interaction segment (residues 709-729) from the cell membrane allowing the sequential phosphorylation of Tyr-713 and Tyr-690. Constitutively phosphorylated on Ser-734 in resting platelets. Phosphorylated on tyrosine residues by FER and FES in response to FCER1 activation. In endothelial cells Fyn mediates mechanical-force (stretch or pull) induced tyrosine phosphorylation. Palmitoylation by ZDHHC21 is necessary for cell surface expression in endothelial cells and enrichment in membrane rafts. In terms of tissue distribution, expressed on platelets and leukocytes and is primarily concentrated at the borders between endothelial cells. Expressed in human umbilical vein endothelial cells (HUVECs) (at protein level). Expressed on neutrophils (at protein level). Isoform Long predominates in all tissues examined. Isoform Delta12 is detected only in trachea. Isoform Delta14-15 is only detected in lung. Isoform Delta14 is detected in all tissues examined with the strongest expression in heart. Isoform Delta15 is expressed in brain, testis, ovary, cell surface of platelets, human umbilical vein endothelial cells (HUVECs), Jurkat T-cell leukemia, human erythroleukemia (HEL) and U-937 histiocytic lymphoma cell lines (at protein level).

The protein localises to the cell membrane. Its subcellular location is the membrane raft. It is found in the cell junction. Its function is as follows. Cell adhesion molecule which is required for leukocyte transendothelial migration (TEM) under most inflammatory conditions. Tyr-690 plays a critical role in TEM and is required for efficient trafficking of PECAM1 to and from the lateral border recycling compartment (LBRC) and is also essential for the LBRC membrane to be targeted around migrating leukocytes. Trans-homophilic interaction may play a role in endothelial cell-cell adhesion via cell junctions. Heterophilic interaction with CD177 plays a role in transendothelial migration of neutrophils. Homophilic ligation of PECAM1 prevents macrophage-mediated phagocytosis of neighboring viable leukocytes by transmitting a detachment signal. Promotes macrophage-mediated phagocytosis of apoptotic leukocytes by tethering them to the phagocytic cells; PECAM1-mediated detachment signal appears to be disabled in apoptotic leukocytes. Modulates bradykinin receptor BDKRB2 activation. Regulates bradykinin- and hyperosmotic shock-induced ERK1/2 activation in endothelial cells. Induces susceptibility to atherosclerosis. Functionally, does not protect against apoptosis. This chain is Platelet endothelial cell adhesion molecule (PECAM1), found in Homo sapiens (Human).